The following is a 492-amino-acid chain: Tumor necrosis factor receptor superfamily member 8 (492 aa).

Residues 1-18 form the signal peptide; it reads MSILLKAAGLLFLGMLQA. The Extracellular segment spans residues 19-282; it reads FPKDRPLDTT…STGTPFLDPG (264 aa). 2 TNFR-Cys repeats span residues 57–104 and 105–141; these read PCPQ…PRIC and ECQP…NTIC. 4 disulfides stabilise this stretch: Cys-58-Cys-80, Cys-83-Cys-96, Cys-86-Cys-104, and Cys-123-Cys-141. The interval 141–178 is disordered; that stretch reads CDLPSPGSGPNGSNPDDCKTLTSHTTPQAIPTLESPAN. Positions 144-155 are enriched in low complexity; sequence PSPGSGPNGSNP. Residues Asn-151, Asn-178, and Asn-224 are each glycosylated (N-linked (GlcNAc...) asparagine). A compositionally biased stretch (polar residues) spans 160–178; the sequence is TLTSHTTPQAIPTLESPAN. The chain crosses the membrane as a helical span at residues 283 to 303; the sequence is SMLFWVAMVVLLVGSASFLLC. Residues 304–492 are Cytoplasmic-facing; that stretch reads YWKACRRRFQ…DHEPTTVSEK (189 aa). 2 positions are modified to phosphoserine: Ser-334 and Ser-348. Disordered regions lie at residues 336–366 and 432–492; these read PTEK…PPAV and PEGR…VSEK. Polar residues predominate over residues 339 to 360; the sequence is KLTQLQRSGSVTDSSAGHTLSP. 2 stretches are compositionally biased toward basic and acidic residues: residues 450–459 and 478–492; these read EVDHTPHYPE and EGGK…VSEK.

It belongs to the TNFR8 family. As to quaternary structure, interacts with TRAF1, TRAF2, TRAF3 and TRAF5. In terms of tissue distribution, very low level of expression. Detected in spleen, thymus and lung. Highly expressed in HTLV-1 infected T-cell lines.

The protein localises to the cell membrane. Receptor for TNFSF8/CD30L. May play a role in the regulation of cellular growth and transformation of activated lymphoblasts. Regulates gene expression through activation of NF-kappa-B. The protein is Tumor necrosis factor receptor superfamily member 8 of Rattus norvegicus (Rat).